The sequence spans 850 residues: Protein monoglycylase TTLL8 (850 aa).

Disordered stretches follow at residues 1–29 (MEPE…QGIS) and 228–254 (RSSR…DAEN). The TTL domain maps to 222 to 580 (SHQSCSRSSR…DRSCDIGNFE (359 aa)). ATP-binding positions include Lys354, 360–361 (RG), 392–395 (QKYI), 405–407 (KFD), and 449–450 (CN). Arg360 provides a ligand contact to a protein. Residues Asp527, Glu540, and Asn542 each coordinate Mg(2+). Glu540 contacts ATP. A disordered region spans residues 627-652 (AQPLKARGPSAMPDPAQGPPSPALQR).

Requires Mg(2+) as cofactor.

It is found in the cytoplasm. Its subcellular location is the cytoskeleton. It localises to the cell projection. The protein localises to the cilium. The protein resides in the cilium axoneme. It is found in the flagellum axoneme. It carries out the reaction L-glutamyl-[protein] + glycine + ATP = glycyl-L-glutamyl-[protein] + ADP + phosphate + H(+). Monoglycylase which modifies both tubulin and non-tubulin proteins, adding a single glycine to the gamma-carboxyl groups of specific glutamate residues to generate monoglycine side chains within the C-terminal tail of target proteins. Not involved in elongation step of the polyglycylation reaction. Preferentially monoglycylates alpha-tubulin over beta-tubulin. Together with TTLL3, mediates microtubule glycylation of primary and motile cilia, which is essential for their stability and maintenance. Together with TTLL3, glycylates sperm flagella which regulates axonemal dynein motor activity, thereby controlling flagellar beat, directional sperm swimming and male fertility. Monoglycylates non-tubulin proteins such as ANP32A, ANP32B, SET, NCL and NAP1. This Homo sapiens (Human) protein is Protein monoglycylase TTLL8.